The chain runs to 279 residues: Non-structural maintenance of chromosomes element 3 homolog (279 aa).

A disordered region spans residues 1-52 (MLQKPRGRGRPSTQADPERDWGGAGEEGPSTSRAAGGSSQGSRASLSAPTVG). The span at 30 to 48 (STSRAAGGSSQGSRASLSA) shows a compositional bias: low complexity. At serine 38 the chain carries Phosphoserine. Residues 52–279 (GPRTQKQLEL…ATASAPATSS (228 aa)) form an interaction with NSMCE1 region. The region spanning 59-259 (LELKVAELVQ…KDWPTQYCEA (201 aa)) is the MAGE domain.

In terms of assembly, component of the SMC5-SMC6 complex which consists at least of SMC5, SMC6, NSMCE2, NSMCE1, NSMCE4A or EID3 and NSMCE3. NSMCE1, NSMCE4A or EID3 and NSMCE3 probably form a subcomplex that bridges the head domains of the SMC5:SMC6 heterodimer. Interacts with PJA1. Interacts with E2F1 (via C-terminus). Interacts with NGFR (via C-terminus). Interacts with NSMCE1. Interacts with NSMCE4. Interacts with SMC6. Interacts with EID3. As to expression, ubiquitous.

It is found in the cytoplasm. The protein localises to the nucleus. It localises to the chromosome. The protein resides in the telomere. Its function is as follows. Component of the SMC5-SMC6 complex, a complex involved in repair of DNA double-strand breaks by homologous recombination. The complex may promote sister chromatid homologous recombination by recruiting the SMC1-SMC3 cohesin complex to double-strand breaks. The complex is required for telomere maintenance via recombination in ALT (alternative lengthening of telomeres) cell lines and mediates sumoylation of shelterin complex (telosome) components which is proposed to lead to shelterin complex disassembly in ALT-associated PML bodies (APBs). In vitro enhances ubiquitin ligase activity of NSMCE1. Proposed to act through recruitment and/or stabilization of the Ubl-conjugating enzyme (E2) at the E3:substrate complex. May be a growth suppressor that facilitates the entry of the cell into cell cycle arrest. The polypeptide is Non-structural maintenance of chromosomes element 3 homolog (Nsmce3) (Mus musculus (Mouse)).